A 513-amino-acid polypeptide reads, in one-letter code: ATP synthase subunit alpha (513 aa).

169–176 (GDRQTGKT) serves as a coordination point for ATP.

This sequence belongs to the ATPase alpha/beta chains family. As to quaternary structure, F-type ATPases have 2 components, CF(1) - the catalytic core - and CF(0) - the membrane proton channel. CF(1) has five subunits: alpha(3), beta(3), gamma(1), delta(1), epsilon(1). CF(0) has three main subunits: a(1), b(2) and c(9-12). The alpha and beta chains form an alternating ring which encloses part of the gamma chain. CF(1) is attached to CF(0) by a central stalk formed by the gamma and epsilon chains, while a peripheral stalk is formed by the delta and b chains.

It is found in the cell membrane. The catalysed reaction is ATP + H2O + 4 H(+)(in) = ADP + phosphate + 5 H(+)(out). Functionally, produces ATP from ADP in the presence of a proton gradient across the membrane. The alpha chain is a regulatory subunit. This is ATP synthase subunit alpha from Polynucleobacter asymbioticus (strain DSM 18221 / CIP 109841 / QLW-P1DMWA-1) (Polynucleobacter necessarius subsp. asymbioticus).